An 843-amino-acid chain; its full sequence is Glycogen phosphorylase, brain form (843 aa).

A2 carries the post-translational modification N-acetylalanine. S15 is modified (phosphoserine; by PHK; in form phosphorylase A). Residues D43, Y197, and R310 each contribute to the AMP site. A Phosphotyrosine modification is found at Y197. At Y473 the chain carries Phosphotyrosine. K569 serves as a coordination point for pyridoxal 5'-phosphate. Residues 677 to 678 (TG) form a pyridoxal 5'-phosphate region. K681 carries the post-translational modification N6-(pyridoxal phosphate)lysine.

The protein belongs to the glycogen phosphorylase family. As to quaternary structure, homodimer. Dimers associate into a tetramer to form the enzymatically active phosphorylase A. Requires pyridoxal 5'-phosphate as cofactor. In terms of processing, phosphorylation of Ser-15 converts phosphorylase B (unphosphorylated) to phosphorylase A.

The enzyme catalyses [(1-&gt;4)-alpha-D-glucosyl](n) + phosphate = [(1-&gt;4)-alpha-D-glucosyl](n-1) + alpha-D-glucose 1-phosphate. Its activity is regulated as follows. Activity of phosphorylase is controlled both by allosteric means (through the non-covalent binding of metabolites) and by covalent modification. Thus AMP allosterically activates, whereas ATP, ADP, and glucose-6-phosphate allosterically inhibit, phosphorylase B. Glycogen phosphorylase that regulates glycogen mobilization. Phosphorylase is an important allosteric enzyme in carbohydrate metabolism. Enzymes from different sources differ in their regulatory mechanisms and in their natural substrates. However, all known phosphorylases share catalytic and structural properties. This is Glycogen phosphorylase, brain form (PYGB) from Ovis aries (Sheep).